The sequence spans 293 residues: Aspartate carbamoyltransferase catalytic subunit (293 aa).

2 residues coordinate carbamoyl phosphate: Arg-50 and Thr-51. Lys-78 contributes to the L-aspartate binding site. Carbamoyl phosphate is bound by residues Arg-100, His-127, and Gln-130. Residues Arg-160 and Arg-210 each contribute to the L-aspartate site. Residues Ala-253 and Pro-254 each coordinate carbamoyl phosphate.

The protein belongs to the aspartate/ornithine carbamoyltransferase superfamily. ATCase family. As to quaternary structure, heterododecamer (2C3:3R2) of six catalytic PyrB chains organized as two trimers (C3), and six regulatory PyrI chains organized as three dimers (R2).

The catalysed reaction is carbamoyl phosphate + L-aspartate = N-carbamoyl-L-aspartate + phosphate + H(+). Its pathway is pyrimidine metabolism; UMP biosynthesis via de novo pathway; (S)-dihydroorotate from bicarbonate: step 2/3. Its function is as follows. Catalyzes the condensation of carbamoyl phosphate and aspartate to form carbamoyl aspartate and inorganic phosphate, the committed step in the de novo pyrimidine nucleotide biosynthesis pathway. This is Aspartate carbamoyltransferase catalytic subunit from Staphylococcus epidermidis (strain ATCC 35984 / DSM 28319 / BCRC 17069 / CCUG 31568 / BM 3577 / RP62A).